The primary structure comprises 332 residues: Ribose-phosphate pyrophosphokinase (332 aa).

Position 55–57 (55–57 (DGE)) interacts with ATP. Mg(2+)-binding residues include His148 and Asp187. Lys211 is a catalytic residue. Residues Arg213, Asp237, and 241–245 (DTGGT) each bind D-ribose 5-phosphate.

It belongs to the ribose-phosphate pyrophosphokinase family. Class I subfamily. In terms of assembly, homohexamer. The cofactor is Mg(2+).

The protein resides in the cytoplasm. It carries out the reaction D-ribose 5-phosphate + ATP = 5-phospho-alpha-D-ribose 1-diphosphate + AMP + H(+). It functions in the pathway metabolic intermediate biosynthesis; 5-phospho-alpha-D-ribose 1-diphosphate biosynthesis; 5-phospho-alpha-D-ribose 1-diphosphate from D-ribose 5-phosphate (route I): step 1/1. Functionally, involved in the biosynthesis of the central metabolite phospho-alpha-D-ribosyl-1-pyrophosphate (PRPP) via the transfer of pyrophosphoryl group from ATP to 1-hydroxyl of ribose-5-phosphate (Rib-5-P). The sequence is that of Ribose-phosphate pyrophosphokinase from Prochlorococcus marinus (strain MIT 9313).